The primary structure comprises 136 residues: Transmembrane protein 203 (136 aa).

Positions 1-51 (MLFSLRELVQWLGFATFEIFVHLLALLVFSVLLALRVDGLVPGLSWWNVFV) are interaction with STING1. 4 helical membrane passes run 14 to 34 (FATFEIFVHLLALLVFSVLLA), 50 to 72 (FVPFFAADGLSTYFTTIVSVRLF), 81 to 101 (VLRLFWVLTVLSLKFVFEMLL), and 112 to 132 (LWFGLITSPLFILLQLLMIRA). Residues 52–136 (PFFAADGLST…LLMIRACRVN (85 aa)) are required for the lysosomal localization of the STING-TMEM203 complex.

Homodimer. Interacts with ATP2A2, ITPR3 and STIM1. Interacts with STING1 (via transmembrane domain). In terms of tissue distribution, increased expression seen in T-lymphocytes from patients with systemic lupus erythematosus (SLE).

The protein localises to the endoplasmic reticulum membrane. The protein resides in the endoplasmic reticulum-Golgi intermediate compartment. Its subcellular location is the lysosome membrane. Involved in the regulation of cellular calcium homeotasis. Required for spermatogenesis. Acts as a regulator of STING-mediated inflammatory signaling in macrophages. Forms a complex with STING, promoting the activity of TBK1 kinase and the transcription factor IRF3, leading to activation of type I interferon expression. The sequence is that of Transmembrane protein 203 (TMEM203) from Homo sapiens (Human).